The chain runs to 48 residues: Large ribosomal subunit protein bL33A (48 aa).

It belongs to the bacterial ribosomal protein bL33 family.

The polypeptide is Large ribosomal subunit protein bL33A (Streptococcus pyogenes serotype M28 (strain MGAS6180)).